The chain runs to 193 residues: Holliday junction branch migration complex subunit RuvA (193 aa).

Residues 1 to 64 form a domain I region; that stretch reads MIGRIAGILL…EDAHLLYGFL (64 aa). Positions 65 to 139 are domain II; sequence TQQERTTFRE…GKLGADLGAL (75 aa). The segment at 139 to 143 is flexible linker; the sequence is LAGAA. The domain III stretch occupies residues 144-193; that stretch reads SPSDHATDILNALLALGYSEKEGLAAIKNVPAGTGVSEGIKLALKALSKA.

This sequence belongs to the RuvA family. In terms of assembly, homotetramer. Forms an RuvA(8)-RuvB(12)-Holliday junction (HJ) complex. HJ DNA is sandwiched between 2 RuvA tetramers; dsDNA enters through RuvA and exits via RuvB. An RuvB hexamer assembles on each DNA strand where it exits the tetramer. Each RuvB hexamer is contacted by two RuvA subunits (via domain III) on 2 adjacent RuvB subunits; this complex drives branch migration. In the full resolvosome a probable DNA-RuvA(4)-RuvB(12)-RuvC(2) complex forms which resolves the HJ.

The protein resides in the cytoplasm. Functionally, the RuvA-RuvB-RuvC complex processes Holliday junction (HJ) DNA during genetic recombination and DNA repair, while the RuvA-RuvB complex plays an important role in the rescue of blocked DNA replication forks via replication fork reversal (RFR). RuvA specifically binds to HJ cruciform DNA, conferring on it an open structure. The RuvB hexamer acts as an ATP-dependent pump, pulling dsDNA into and through the RuvAB complex. HJ branch migration allows RuvC to scan DNA until it finds its consensus sequence, where it cleaves and resolves the cruciform DNA. This chain is Holliday junction branch migration complex subunit RuvA, found in Burkholderia cenocepacia (strain ATCC BAA-245 / DSM 16553 / LMG 16656 / NCTC 13227 / J2315 / CF5610) (Burkholderia cepacia (strain J2315)).